The chain runs to 723 residues: tRNA (guanine(27)-N(2))-dimethyltransferase (723 aa).

The segment covering 1-10 (MENMAEEELL) has biased composition (acidic residues). The disordered stretch occupies residues 1–72 (MENMAEEELL…SLASVPEEAE (72 aa)). T23 is subject to Phosphothreonine. A compositionally biased stretch (low complexity) spans 32–44 (PAADTALDSAPTP). Residues 45 to 59 (DSAPAPALAPAPAPA) are compositionally biased toward pro residues. Phosphoserine is present on S61. A Nucleolar localization signal motif is present at residues 128-132 (HKLRR). A C2H2-type zinc finger spans residues 177 to 199 (YHCIICSATITRRTDMLGHVKRH). Residues 220-679 (EVLKETDTDI…ASLTQFKSIL (460 aa)) enclose the Trm1 methyltransferase domain. S-adenosyl-L-methionine contacts are provided by R253, D300, D348, and A349. Zn(2+)-binding residues include C479, C482, C504, and C506. K576 participates in a covalent cross-link: Glycyl lysine isopeptide (Lys-Gly) (interchain with G-Cter in SUMO2). S603 is subject to Phosphoserine.

The protein belongs to the class I-like SAM-binding methyltransferase superfamily. Trm1 family.

Its subcellular location is the nucleus. The protein resides in the nucleolus. It catalyses the reaction guanosine(27) in tRNA(Tyr) + 2 S-adenosyl-L-methionine = N(2)-dimethylguanosine(27) in tRNA(Tyr) + 2 S-adenosyl-L-homocysteine + 2 H(+). In terms of biological role, specifically dimethylates a single guanine residue at position 27 of tRNA(Tyr) using S-adenosyl-L-methionine as donor of the methyl groups. Dimethylation at position 27 of tRNA(Tyr) is required for efficient translation of tyrosine codons. Also required to maintain 3-(3-amino-3-carboxypropyl)uridine (acp3U) in the D-loop of several cytoplasmic tRNAs. The chain is tRNA (guanine(27)-N(2))-dimethyltransferase from Rattus norvegicus (Rat).